A 1076-amino-acid chain; its full sequence is DNA-directed RNA polymerase subunit beta (1076 aa).

This sequence belongs to the RNA polymerase beta chain family. In plastids the minimal PEP RNA polymerase catalytic core is composed of four subunits: alpha, beta, beta', and beta''. When a (nuclear-encoded) sigma factor is associated with the core the holoenzyme is formed, which can initiate transcription.

The protein localises to the plastid. The enzyme catalyses RNA(n) + a ribonucleoside 5'-triphosphate = RNA(n+1) + diphosphate. DNA-dependent RNA polymerase catalyzes the transcription of DNA into RNA using the four ribonucleoside triphosphates as substrates. The sequence is that of DNA-directed RNA polymerase subunit beta from Euglena longa (Euglenophycean alga).